A 331-amino-acid chain; its full sequence is Ribosomal RNA small subunit methyltransferase H (331 aa).

Residues 49–51, Asp68, Leu102, Asp116, and Gln123 each bind S-adenosyl-L-methionine; that span reads GGH.

Belongs to the methyltransferase superfamily. RsmH family.

It localises to the cytoplasm. It carries out the reaction cytidine(1402) in 16S rRNA + S-adenosyl-L-methionine = N(4)-methylcytidine(1402) in 16S rRNA + S-adenosyl-L-homocysteine + H(+). In terms of biological role, specifically methylates the N4 position of cytidine in position 1402 (C1402) of 16S rRNA. The sequence is that of Ribosomal RNA small subunit methyltransferase H from Renibacterium salmoninarum (strain ATCC 33209 / DSM 20767 / JCM 11484 / NBRC 15589 / NCIMB 2235).